The primary structure comprises 341 residues: Platelet-activating factor receptor (341 aa).

Over 1–16 (MEQNGSFRVDSEFRYT) the chain is Extracellular. An N-linked (GlcNAc...) asparagine glycan is attached at Asn-4. The helical transmembrane segment at 17 to 38 (LFPIVYSVIFVLGVVANGYVLW) threads the bilayer. Residues 39–54 (VFATLYPSKKLNEIKI) lie on the Cytoplasmic side of the membrane. Residues 55–74 (FMVNLTVADLLFLMTLPLWI) form a helical membrane-spanning segment. Residues 75–91 (VYYSNEGDWIVHKFLCN) lie on the Extracellular side of the membrane. Cys-90 and Cys-173 are oxidised to a cystine. The helical transmembrane segment at 92-113 (LAGCLFFINTYCSVAFLGVITY) threads the bilayer. Residues 114 to 133 (NRYQAVAYPIKTAQATTRKR) lie on the Cytoplasmic side of the membrane. Residues 134–155 (GITLSLVIWISIAATASYFLAT) form a helical membrane-spanning segment. The Extracellular portion of the chain corresponds to 156 to 184 (DSTNVVPKKDGSGNITRCFEHYEPYSVPI). A glycan (N-linked (GlcNAc...) asparagine) is linked at Asn-169. The chain crosses the membrane as a helical span at residues 185–205 (LVVHIFITSCFFLVFFLIFYC). The Cytoplasmic portion of the chain corresponds to 206–233 (NMVIIHTLLTRPVRQQRKPEVKRRALWM). A helical transmembrane segment spans residues 234-254 (VCTVLAVFVICFVPHHVVQLP). Residues 255 to 275 (WTLAELGYQTNFHQAINDAHQ) lie on the Extracellular side of the membrane. The chain crosses the membrane as a helical span at residues 276–295 (ITLCLLSTNCVLDPVIYCFL). Over 296–341 (TKKFRKHLSEKFYSMRSSRKCSRATSDTCTEVMMPANQTPVLPLKN) the chain is Cytoplasmic.

Belongs to the G-protein coupled receptor 1 family. As to quaternary structure, interacts with ARRB1. As to expression, present in almost all organs including spleen, small intestine, kidney, lung, liver and brain.

Its subcellular location is the cell membrane. In terms of biological role, receptor for platelet activating factor, a chemotactic phospholipid mediator that possesses potent inflammatory, smooth-muscle contractile and hypotensive activity. Seems to mediate its action via a G protein that activates a phosphatidylinositol-calcium second messenger system. The polypeptide is Platelet-activating factor receptor (Ptafr) (Rattus norvegicus (Rat)).